Consider the following 1241-residue polypeptide: Interphotoreceptor matrix proteoglycan 2 (1241 aa).

The first 22 residues, 1–22 (MIMFPLFGKISLGILIFVLIEG), serve as a signal peptide directing secretion. Topologically, residues 23-1099 (DFPSLTAQTY…KHCEEFVSEP (1077 aa)) are extracellular. Residue Asn154 is glycosylated (N-linked (GlcNAc...) asparagine). Residues 180–223 (ELSSPVPVGDTSTLGDTTLSVPHPEVDAYEGASESSLERPEESI) are disordered. Over residues 189–199 (DTSTLGDTTLS) the composition is skewed to polar residues. O-linked (GalNAc...) threonine glycans are attached at residues Thr190 and Thr192. The region spanning 239-353 (GEQIAEFSIH…KPTVVYTISN (115 aa)) is the SEA 1 domain. Residues 259–267 (QDSSSFHHQ) are hyaluronan-binding motif involved in chondroitin sulfate A-binding. 3 N-linked (GlcNAc...) asparagine glycosylation sites follow: Asn301, Asn320, and Asn370. Thr544 and Thr556 each carry an O-linked (GalNAc...) threonine glycan. The span at 660–678 (QISKHSKYEHDDRSTHFPE) shows a compositional bias: basic and acidic residues. Residues 660–684 (QISKHSKYEHDDRSTHFPEEEPLSG) are disordered. The 114-residue stretch at 897–1010 (GALVVFFSLR…YSLDVESGDE (114 aa)) folds into the SEA 2 domain. 2 N-linked (GlcNAc...) asparagine glycosylation sites follow: Asn942 and Asn956. 2 consecutive EGF-like domains span residues 1010–1051 (EANP…RPCQ) and 1052–1093 (SLCD…KHCE). Cystine bridges form between Cys1014–Cys1025, Cys1019–Cys1036, Cys1038–Cys1050, Cys1054–Cys1067, Cys1061–Cys1077, and Cys1079–Cys1092. Residues 1080 to 1088 (RVGENWWYR) are hyaluronan-binding motif involved in chondroitin sulfate C-binding. A helical membrane pass occupies residues 1100-1120 (VIIGITIASVVGLLVIFSAII). Topologically, residues 1121-1241 (YFFIRTLQAH…FVREQQVEEV (121 aa)) are cytoplasmic. A hyaluronan-binding motif involved in chondroitin sulfate A- and C-binding region spans residues 1125–1133 (RTLQAHHDR). The tract at residues 1136–1145 (RESPFSGSSR) is hyaluronan-binding motif involved in chondroitin sulfate C-binding. Positions 1210 to 1218 (REEIQERMR) are hyaluronan-binding motif involved in chondroitin sulfate A- and C-binding motif.

In terms of processing, highly glycosylated (N- and O-linked carbohydrates). In terms of tissue distribution, expressed in the retina (at protein level). Expressed by photoreceptors of the interphotoreceptor matrix (IPM) surrounding both rods and cones (at protein level). IPM occupies the subretinal space between the apices of the retinal pigment epithelium and the neural retina. Expressed in the pineal gland (at protein level).

The protein localises to the photoreceptor outer segment membrane. It localises to the photoreceptor inner segment membrane. The protein resides in the secreted. It is found in the extracellular space. Its subcellular location is the extracellular matrix. The protein localises to the interphotoreceptor matrix. Functionally, chondroitin sulfate- and hyaluronan-binding proteoglycan involved in the organization of interphotoreceptor matrix; may participate in the maturation and maintenance of the light-sensitive photoreceptor outer segment. Binds heparin. This Homo sapiens (Human) protein is Interphotoreceptor matrix proteoglycan 2 (IMPG2).